The chain runs to 362 residues: Peptide chain release factor 1 (362 aa).

An N5-methylglutamine modification is found at glutamine 240.

The protein belongs to the prokaryotic/mitochondrial release factor family. Methylated by PrmC. Methylation increases the termination efficiency of RF1.

The protein localises to the cytoplasm. Peptide chain release factor 1 directs the termination of translation in response to the peptide chain termination codons UAG and UAA. The polypeptide is Peptide chain release factor 1 (Bifidobacterium longum (strain DJO10A)).